The primary structure comprises 33 residues: Alpha-amanitin proprotein (33 aa).

Positions 1 to 10 are excised as a propeptide; it reads MSDINATRLP. Isoleucine 11 is modified ((3R,4R)-4,5-dihydroxyisoleucine; in form alpha-amanitin). At isoleucine 11 the chain carries (3R,4S)-4-hydroxyisoleucine; in form gamma-amanitin. Residues 11–18 constitute a cross-link (cyclopeptide (Ile-Pro)); that stretch reads IWGIGCNP. The segment at residues 12-16 is a cross-link (2'-cysteinyl-6'-hydroxytryptophan sulfoxide (Trp-Cys)); sequence WGIGC. Proline 18 carries the 4-hydroxyproline modification. Residues 19–33 constitute a propeptide that is removed on maturation; the sequence is SVGDEVTALLTSGEA.

Belongs to the MSDIN fungal toxin family. In terms of processing, processed by the macrocyclase-peptidase enzyme POPB to yield a toxic cyclic decapeptide. POPB first removes 10 residues from the N-terminus. Conformational trapping of the remaining peptide forces the enzyme to release this intermediate rather than proceed to macrocyclization. The enzyme rebinds the remaining peptide in a different conformation and catalyzes macrocyclization of the N-terminal 8 residues.

Its function is as follows. Major toxin belonging to the bicyclic octapeptides amatoxins that acts by binding non-competitively to RNA polymerase II and greatly slowing the elongation of transcripts from target promoters. This Amanita fuliginea (East Asian brown death cap) protein is Alpha-amanitin proprotein.